A 410-amino-acid polypeptide reads, in one-letter code: Tyrosine--tRNA ligase (410 aa).

Residue tyrosine 36 coordinates L-tyrosine. The 'HIGH' region signature appears at 41–50 (ATADSLTAGH). Positions 169 and 173 each coordinate L-tyrosine. Positions 229–233 (KMGKT) match the 'KMSKS' region motif. Lysine 232 is an ATP binding site. The region spanning 343–409 (IDLITMMIDA…GKKAYHLFRA (67 aa)) is the S4 RNA-binding domain.

This sequence belongs to the class-I aminoacyl-tRNA synthetase family. TyrS type 1 subfamily. In terms of assembly, homodimer.

The protein localises to the cytoplasm. It catalyses the reaction tRNA(Tyr) + L-tyrosine + ATP = L-tyrosyl-tRNA(Tyr) + AMP + diphosphate + H(+). Catalyzes the attachment of tyrosine to tRNA(Tyr) in a two-step reaction: tyrosine is first activated by ATP to form Tyr-AMP and then transferred to the acceptor end of tRNA(Tyr). This is Tyrosine--tRNA ligase from Lachnoclostridium phytofermentans (strain ATCC 700394 / DSM 18823 / ISDg) (Clostridium phytofermentans).